Reading from the N-terminus, the 1125-residue chain is Transcription-repair-coupling factor (1125 aa).

The region spanning 597–758 (DMMSFKVMDR…LIKLRDISVL (162 aa)) is the Helicase ATP-binding domain. 610–617 (GDVGFGKT) provides a ligand contact to ATP. The short motif at 711 to 714 (DEEQ) is the DEEQ box element. Residues 774–933 (SFSELLIKHA…GFKIAMKDME (160 aa)) form the Helicase C-terminal domain.

This sequence in the N-terminal section; belongs to the UvrB family. In the C-terminal section; belongs to the helicase family. RecG subfamily.

Its subcellular location is the cytoplasm. Functionally, couples transcription and DNA repair by recognizing RNA polymerase (RNAP) stalled at DNA lesions. Mediates ATP-dependent release of RNAP and its truncated transcript from the DNA, and recruitment of nucleotide excision repair machinery to the damaged site. In Borreliella burgdorferi (strain ATCC 35210 / DSM 4680 / CIP 102532 / B31) (Borrelia burgdorferi), this protein is Transcription-repair-coupling factor.